Here is a 486-residue protein sequence, read N- to C-terminus: Malonate-semialdehyde dehydrogenase (486 aa).

The NAD(+) site is built by F154, K178, E181, R182, and S231. The Nucleophile role is filled by C286. NAD(+) is bound at residue E386.

It belongs to the aldehyde dehydrogenase family. IolA subfamily. In terms of assembly, homotetramer.

It carries out the reaction 3-oxopropanoate + NAD(+) + CoA + H2O = hydrogencarbonate + acetyl-CoA + NADH + H(+). The catalysed reaction is 2-methyl-3-oxopropanoate + NAD(+) + CoA + H2O = propanoyl-CoA + hydrogencarbonate + NADH + H(+). It functions in the pathway polyol metabolism; myo-inositol degradation into acetyl-CoA; acetyl-CoA from myo-inositol: step 7/7. Catalyzes the oxidation of malonate semialdehyde (MSA) and methylmalonate semialdehyde (MMSA) into acetyl-CoA and propanoyl-CoA, respectively. Is involved in a myo-inositol catabolic pathway. Bicarbonate, and not CO2, is the end-product of the enzymatic reaction. The sequence is that of Malonate-semialdehyde dehydrogenase from Bacillus cereus (strain B4264).